Consider the following 403-residue polypeptide: Alkaline protease 1 (403 aa).

The first 21 residues, 1 to 21, serve as a signal peptide directing secretion; sequence MQSIKRTLLLLGALLPAALAA. The propeptide occupies 22-125; that stretch reads PAREPHPSSN…QIWYLDALTT (104 aa). Residues 36-120 form the Inhibitor I9 domain; the sequence is KYIITFKSGI…HVEEDQIWYL (85 aa). Residues 130–403 enclose the Peptidase S8 domain; sequence PWGLGSISHK…PNKLAYNGAA (274 aa). Active-site charge relay system residues include Asp162 and His193. N-linked (GlcNAc...) asparagine glycans are attached at residues Asn253 and Asn307. Catalysis depends on Ser349, which acts as the Charge relay system.

Belongs to the peptidase S8 family.

It is found in the secreted. The catalysed reaction is Hydrolysis of proteins with broad specificity, and of Bz-Arg-OEt &gt; Ac-Tyr-OEt. Does not hydrolyze peptide amides.. Functionally, secreted alkaline protease that allows assimilation of proteinaceous substrates. This chain is Alkaline protease 1 (alp1), found in Aspergillus clavatus (strain ATCC 1007 / CBS 513.65 / DSM 816 / NCTC 3887 / NRRL 1 / QM 1276 / 107).